The following is a 393-amino-acid chain: Trehalose import ATP-binding protein SugC (393 aa).

In terms of domain architecture, ABC transporter spans 4 to 235 (IVLDHVNKSY…PANLFVAGFI (232 aa)). Position 37-44 (37-44 (GPSGCGKT)) interacts with ATP. The short motif at 135-139 (LSGGQ) is the Helical C-loop; LSGGQ motif element.

This sequence belongs to the ABC transporter superfamily. In terms of assembly, monomer. Homodimerizes in the presence of ATP. The complex is composed of two ATP-binding proteins (SugC), two transmembrane proteins (SugA and SugB) and a solute-binding protein (LpqY).

It is found in the cell inner membrane. It catalyses the reaction alpha,alpha-trehalose(out) + ATP + H2O = alpha,alpha-trehalose(in) + ADP + phosphate + H(+). Part of the ABC transporter complex LpqY-SugA-SugB-SugC, which is highly specific for uptake of trehalose. Involved in the recycling of extracellular trehalose released from trehalose-containing molecules synthesized by M.tuberculosis. Trehalose uptake is essential for virulence. Responsible for energy coupling to the transport system. The chain is Trehalose import ATP-binding protein SugC (sugC) from Mycobacterium tuberculosis (strain CDC 1551 / Oshkosh).